We begin with the raw amino-acid sequence, 157 residues long: RNA pyrophosphohydrolase (157 aa).

Residues 6–149 (SYRPNVAAVI…KRKVYRRVID (144 aa)) enclose the Nudix hydrolase domain. The short motif at 43 to 64 (GGIDEGETPEDALYRELLEEIG) is the Nudix box element.

It belongs to the Nudix hydrolase family. RppH subfamily. The cofactor is a divalent metal cation.

In terms of biological role, accelerates the degradation of transcripts by removing pyrophosphate from the 5'-end of triphosphorylated RNA, leading to a more labile monophosphorylated state that can stimulate subsequent ribonuclease cleavage. The polypeptide is RNA pyrophosphohydrolase (Sulfurovum sp. (strain NBC37-1)).